The sequence spans 839 residues: MAAAVAMRGSSSDGGGYDKVSGMDSGKYVRYTPEQVEALERVYADCPKPTSSRRQQLLRECPILANIEPKQIKVWFQNRRCRDKQRKESSRLQAVNRKLTAMNKLLMEENERLQKQVSQLVHENAHMRQQLQNTPLANDTSCESNVTTPQNPLRDASNPSGLLSIAEETLTEFLSKATGTAIDWVQMPGMKPGPDSVGIVAISHGCRGVAARACGLVNLEPTKVVEILKDRPSWFRDCRNLEVFTMIPAGNGGTVELVYTQLYAPTTLVPARDFWTLRYTTTMEDGSLVVCERSLSGSGGGPSAASAQQYVRAEMLPSGYLVRPCEGGGSIVHIVDHLDLEAWSVPEVLRPLYESSRVVAQKMTTAALRHIRQIAQETSGEVVYALGRQPAVLRTFSQRLSRGFNDAISGFNDDGWSIMGGDGVEDVVIACNSTKKIRSNSNAGIAFGAPGGIICAKASMLLQSVPPAVLVRFLREHRSEWADYNIDAYLASTLKTSACSLPGLRPMRFSGSQIIIPLAHTVENEEILEVVRLEGQPLTHDEALLSRDIHLLQLCTGIDEKSVGSSFQLVFAPIDDFPDETPLISSGFRVIPLDMKTDGASSGRTLDLASSLEVGSATAQASGDASADDCNLRSVLTIAFQFPYELHLQDSVAAMARQYVRSIVSAVQRVSMAISPSQTGLNAGQRIISGFPEAATLARWVCQSYHYHLGVELLSQSDGDAEQLLKMLWHYQDAILCCSFKEKPVFTFANKAGLDMLETSLVALQDLTLDRIFDEPGKEALFSNIPKLMEQGHVYLPSGVCMSGMGRHVSFDQAVAWKVLAEDSNVHCLAFCFVNWSFV.

2 disordered regions span residues 1–24 (MAAA…SGMD) and 132–157 (QNTP…RDAS). The segment at residues 24-87 (DSGKYVRYTP…NRRCRDKQRK (64 aa)) is a DNA-binding region (homeobox). Residues 91-134 (RLQAVNRKLTAMNKLLMEENERLQKQVSQLVHENAHMRQQLQNT) are a coiled coil. Positions 155–383 (DASNPSGLLS…IAQETSGEVV (229 aa)) constitute an START domain.

The protein belongs to the HD-ZIP homeobox family. Class III subfamily. Expressed in stems, leaf sheaths and blades and panicles.

Its subcellular location is the nucleus. Functionally, probable transcription factor. The protein is Homeobox-leucine zipper protein HOX10 (HOX10) of Oryza sativa subsp. indica (Rice).